The primary structure comprises 492 residues: Trigger factor (492 aa).

The disordered stretch occupies residues 77–96 (EILSSRGEKSATQPAISMTE). The 86-residue stretch at 169-254 (GDRVTMNYLG…VKEVAAAAAV (86 aa)) folds into the PPIase FKBP-type domain. The interval 439–492 (ELLADDGEEETETKKKAPAKKKAAAKADDAAEGEEAAPKKKAPAKKKATEADAE) is disordered.

Belongs to the FKBP-type PPIase family. Tig subfamily.

Its subcellular location is the cytoplasm. It catalyses the reaction [protein]-peptidylproline (omega=180) = [protein]-peptidylproline (omega=0). Involved in protein export. Acts as a chaperone by maintaining the newly synthesized protein in an open conformation. Functions as a peptidyl-prolyl cis-trans isomerase. This Agrobacterium fabrum (strain C58 / ATCC 33970) (Agrobacterium tumefaciens (strain C58)) protein is Trigger factor.